Consider the following 575-residue polypeptide: DNA polymerase lambda (575 aa).

The BRCT domain maps to 36–132 (EAEEWLSSLR…RLVDVAGFSI (97 aa)). The segment at 160-205 (ALLQTALPPPPSPTRPVSPPQKTKEAPNTQAQPISDDEASDGEETQ) is disordered. Residues 166–178 (LPPPPSPTRPVSP) show a composition bias toward pro residues. Positions 194-203 (SDDEASDGEE) are enriched in acidic residues. The segment at 265–279 (KAYSVQGDKWRALGY) is DNA-binding. K312 serves as the catalytic Schiff-base intermediate with DNA. The tract at residues 345-348 (GTKT) is DNA-binding. DCTP is bound by residues R386, 417 to 420 (SYRR), and 426 to 429 (GDVD). Positions 420 to 429 (RGKATCGDVD) are involved in primer binding. Residues D427, D429, and D490 each coordinate Mn(2+). Positions 466–505 (ENGQQQKYLGVCRLPGPGWRHRRLDIIVVPYSEFACALLY) are DNA-binding. N513 provides a ligand contact to dCTP.

It belongs to the DNA polymerase type-X family. In terms of assembly, interacts with PCNA. Interacts with PAXX; promoting POLL recruitment to double-strand breaks (DSBs) and stimulation of the end-filling activity of POLL. Interacts with XRCC4; promoting POLL recruitment to double-strand breaks (DSBs) and stimulation of the end-filling activity of POLL. Interacts with NHEJ1/XLF; promoting POLL recruitment to double-strand breaks (DSBs) and stimulation of the end-filling activity of POLL. The cofactor is Mn(2+).

It localises to the nucleus. The enzyme catalyses DNA(n) + a 2'-deoxyribonucleoside 5'-triphosphate = DNA(n+1) + diphosphate. In terms of biological role, DNA polymerase that functions in several pathways of DNA repair. Involved in base excision repair (BER) responsible for repair of lesions that give rise to abasic (AP) sites in DNA. Also contributes to DNA double-strand break repair by non-homologous end joining and homologous recombination. Has both template-dependent and template-independent (terminal transferase) DNA polymerase activities. Also has a 5'-deoxyribose-5-phosphate lyase (dRP lyase) activity. The sequence is that of DNA polymerase lambda from Macaca fascicularis (Crab-eating macaque).